The following is a 278-amino-acid chain: Membrane protein insertase YidC 2 (278 aa).

Residues Met-1–Gly-18 form the signal peptide. A lipid anchor (N-palmitoyl cysteine) is attached at Cys-19. Cys-19 carries S-diacylglycerol cysteine lipidation. A run of 4 helical transmembrane segments spans residues Gly-55–Ile-75, Met-132–Leu-152, Leu-176–His-196, and Ala-224–Phe-244.

The protein belongs to the OXA1/ALB3/YidC family. Type 2 subfamily.

Its subcellular location is the cell membrane. Required for the insertion and/or proper folding and/or complex formation of integral membrane proteins into the membrane. Involved in integration of membrane proteins that insert both dependently and independently of the Sec translocase complex, as well as at least some lipoproteins. The chain is Membrane protein insertase YidC 2 from Staphylococcus epidermidis (strain ATCC 12228 / FDA PCI 1200).